We begin with the raw amino-acid sequence, 335 residues long: MQLEIINPESTLVNDVVAHRVAFSIGSNFNIYWYGIIFVCGFLIAILTYSLRLKFHYKVPYDPGFYYIFLAIPMTIIGARLWSLAIGDAKDFFDFRSGGLAIQGGVIAGVLSAAVYFPLILRMPKYHIRDIDADGNVVIRQPSMWIYADAIIPTILIGQALGRWGNFINGEIFGAESTVNDLQWLKKAMPAVFEGMKHYFIEGNKTLFTIYQPLFLYESFFNVIVFVFIYFGLSYIKQLKIGFISMSYFFFYGVTRFSTESARAPQFSFEGTYIINSLLLIFGVLGALYVQFIAPLLRKKFLLDAIIEMFYKKKDQIHKFGELRKPEEFLFYCHK.

3 helical membrane-spanning segments follow: residues I31 to L51, Y67 to G87, and L100 to I120. R163 contacts a 1,2-diacyl-sn-glycero-3-phospho-(1'-sn-glycerol). A run of 3 helical transmembrane segments spans residues P213–L233, Y235–T255, and S277–L297.

The protein belongs to the Lgt family.

It is found in the cell membrane. It carries out the reaction L-cysteinyl-[prolipoprotein] + a 1,2-diacyl-sn-glycero-3-phospho-(1'-sn-glycerol) = an S-1,2-diacyl-sn-glyceryl-L-cysteinyl-[prolipoprotein] + sn-glycerol 1-phosphate + H(+). The protein operates within protein modification; lipoprotein biosynthesis (diacylglyceryl transfer). Catalyzes the transfer of the diacylglyceryl group from phosphatidylglycerol to the sulfhydryl group of the N-terminal cysteine of a prolipoprotein, the first step in the formation of mature lipoproteins. This Ureaplasma parvum serovar 3 (strain ATCC 27815 / 27 / NCTC 11736) protein is Phosphatidylglycerol--prolipoprotein diacylglyceryl transferase.